A 320-amino-acid polypeptide reads, in one-letter code: Glutathione synthetase (320 aa).

Positions 133–317 constitute an ATP-grasp domain; that stretch reads KMYTLQFAAV…LGEKVICWLE (185 aa). Residue 159–215 coordinates ATP; that stretch reads LEEHGAAVLKPLGGKAGEGILFLDPGDRNFNSLVEISTQHGKEPVMVQRFLPEAKEG. Positions 288 and 290 each coordinate Mg(2+).

This sequence belongs to the prokaryotic GSH synthase family. Mg(2+) serves as cofactor. Requires Mn(2+) as cofactor.

The catalysed reaction is gamma-L-glutamyl-L-cysteine + glycine + ATP = glutathione + ADP + phosphate + H(+). Its pathway is sulfur metabolism; glutathione biosynthesis; glutathione from L-cysteine and L-glutamate: step 2/2. The polypeptide is Glutathione synthetase (Synechocystis sp. (strain ATCC 27184 / PCC 6803 / Kazusa)).